Reading from the N-terminus, the 158-residue chain is Aspartate carbamoyltransferase regulatory chain (158 aa).

Positions 111, 116, 140, and 143 each coordinate Zn(2+).

It belongs to the PyrI family. Contains catalytic and regulatory chains. Zn(2+) is required as a cofactor.

Its function is as follows. Involved in allosteric regulation of aspartate carbamoyltransferase. The polypeptide is Aspartate carbamoyltransferase regulatory chain (Metallosphaera sedula (strain ATCC 51363 / DSM 5348 / JCM 9185 / NBRC 15509 / TH2)).